A 660-amino-acid chain; its full sequence is tRNA 5-methylaminomethyl-2-thiouridine biosynthesis bifunctional protein MnmC (660 aa).

The interval 1-235 (MTITRHARID…KWEVLRGAFI (235 aa)) is tRNA (mnm(5)s(2)U34)-methyltransferase. Residues 266–660 (IGAGLAGCAT…LRGLIRGGGK (395 aa)) are FAD-dependent cmnm(5)s(2)U34 oxidoreductase.

It in the N-terminal section; belongs to the methyltransferase superfamily. tRNA (mnm(5)s(2)U34)-methyltransferase family. In the C-terminal section; belongs to the DAO family. It depends on FAD as a cofactor.

Its subcellular location is the cytoplasm. It catalyses the reaction 5-aminomethyl-2-thiouridine(34) in tRNA + S-adenosyl-L-methionine = 5-methylaminomethyl-2-thiouridine(34) in tRNA + S-adenosyl-L-homocysteine + H(+). Functionally, catalyzes the last two steps in the biosynthesis of 5-methylaminomethyl-2-thiouridine (mnm(5)s(2)U) at the wobble position (U34) in tRNA. Catalyzes the FAD-dependent demodification of cmnm(5)s(2)U34 to nm(5)s(2)U34, followed by the transfer of a methyl group from S-adenosyl-L-methionine to nm(5)s(2)U34, to form mnm(5)s(2)U34. The polypeptide is tRNA 5-methylaminomethyl-2-thiouridine biosynthesis bifunctional protein MnmC (Pseudomonas syringae pv. tomato (strain ATCC BAA-871 / DC3000)).